Reading from the N-terminus, the 391-residue chain is Transposase for insertion sequence element IS905 (391 aa).

The protein belongs to the transposase mutator family.

Required for the transposition of the insertion element. The polypeptide is Transposase for insertion sequence element IS905 (tra905) (Lactococcus lactis subsp. lactis (strain IL1403) (Streptococcus lactis)).